Consider the following 150-residue polypeptide: Small ribosomal subunit protein uS11 (150 aa).

It belongs to the universal ribosomal protein uS11 family. As to quaternary structure, part of the 30S ribosomal subunit. Interacts with proteins S7 and S18. Binds to IF-3.

Functionally, located on the platform of the 30S subunit, it bridges several disparate RNA helices of the 16S rRNA. Forms part of the Shine-Dalgarno cleft in the 70S ribosome. In Pelagibacter ubique (strain HTCC1062), this protein is Small ribosomal subunit protein uS11.